Reading from the N-terminus, the 369-residue chain is Glutamate 5-kinase (369 aa).

Lys11 is an ATP binding site. Substrate-binding residues include Ser51, Asp138, and Asn150. Residues 170–171 (TD) and 212–218 (TGGMATK) contribute to the ATP site. The region spanning 277–355 (KGSIVIDEGA…QDIYAVLGYE (79 aa)) is the PUA domain.

This sequence belongs to the glutamate 5-kinase family.

The protein localises to the cytoplasm. The catalysed reaction is L-glutamate + ATP = L-glutamyl 5-phosphate + ADP. It participates in amino-acid biosynthesis; L-proline biosynthesis; L-glutamate 5-semialdehyde from L-glutamate: step 1/2. Functionally, catalyzes the transfer of a phosphate group to glutamate to form L-glutamate 5-phosphate. This chain is Glutamate 5-kinase, found in Aliivibrio fischeri (strain ATCC 700601 / ES114) (Vibrio fischeri).